A 459-amino-acid polypeptide reads, in one-letter code: 4,4'-diaponeurosporen-aldehyde dehydrogenase (459 aa).

NAD(+)-binding positions include 114 to 115 (FN) and 188 to 189 (GS). Glu210 serves as the catalytic Proton acceptor. Met211 is a binding site for NAD(+). The active-site Nucleophile is Cys244. Glu336 is an NAD(+) binding site.

This sequence belongs to the aldehyde dehydrogenase family.

It carries out the reaction 4,4'-diaponeurosporenal + NAD(+) + H2O = 4,4'-diaponeurosporenoate + NADH + 2 H(+). It participates in carotenoid biosynthesis; staphyloxanthin biosynthesis; staphyloxanthin from farnesyl diphosphate. Its function is as follows. Involved in the biosynthesis of the yellow-orange carotenoid staphyloxanthin, which plays a role in the virulence via its protective function against oxidative stress. Catalyzes the oxidation of 4,4'-diaponeurosporen-4-al to yield 4,4'-diaponeurosporenoic acid. This Staphylococcus aureus (strain NCTC 8325 / PS 47) protein is 4,4'-diaponeurosporen-aldehyde dehydrogenase.